Reading from the N-terminus, the 184-residue chain is Endothelial cell-specific molecule 1 (184 aa).

A signal peptide spans 1-19 (MKSVLLLTTLLVPAHLVAA). One can recognise an IGFBP N-terminal domain in the interval 24–102 (YAVDCPQHCD…GEEFGICKDC (79 aa)). 6 disulfide bridges follow: cysteine 28/cysteine 51, cysteine 32/cysteine 53, cysteine 37/cysteine 54, cysteine 43/cysteine 57, cysteine 65/cysteine 83, and cysteine 77/cysteine 99. O-linked (Xyl...) (chondroitin sulfate) serine glycosylation occurs at serine 156.

As to quaternary structure, monomer. In terms of processing, may contain intrachain disulfide bonds. O-glycosylated; contains chondroitin sulfate and dermatan sulfate. As to expression, expressed in lung, on the vascular capillary network within alveolar walls, and also at lower level in kidney.

It is found in the secreted. Its function is as follows. Involved in angiogenesis; promotes angiogenic sprouting. May have potent implications in lung endothelial cell-leukocyte interactions. This chain is Endothelial cell-specific molecule 1 (ESM1), found in Homo sapiens (Human).